The chain runs to 392 residues: DNA replication and repair protein RecF (392 aa).

An ATP-binding site is contributed by 33-40 (GANGAGKT).

This sequence belongs to the RecF family.

It localises to the cytoplasm. Functionally, the RecF protein is involved in DNA metabolism; it is required for DNA replication and normal SOS inducibility. RecF binds preferentially to single-stranded, linear DNA. It also seems to bind ATP. The protein is DNA replication and repair protein RecF of Caulobacter sp. (strain K31).